A 99-amino-acid polypeptide reads, in one-letter code: Large ribosomal subunit protein bL21 (99 aa).

This sequence belongs to the bacterial ribosomal protein bL21 family. Part of the 50S ribosomal subunit. Contacts protein L20.

This protein binds to 23S rRNA in the presence of protein L20. This chain is Large ribosomal subunit protein bL21, found in Mycoplasma mobile (strain ATCC 43663 / 163K / NCTC 11711) (Mesomycoplasma mobile).